Here is a 489-residue protein sequence, read N- to C-terminus: Adenosylhomocysteinase (489 aa).

Substrate is bound by residues Thr68, Asp151, and Glu213. 214–216 (TTT) lines the NAD(+) pocket. Substrate contacts are provided by Lys243 and Asp247. NAD(+)-binding positions include Asn248, 277-282 (GYGDVG), Glu300, Asn335, 356-358 (IGH), and Asn403.

The protein belongs to the adenosylhomocysteinase family. Requires NAD(+) as cofactor.

It localises to the cytoplasm. It carries out the reaction S-adenosyl-L-homocysteine + H2O = L-homocysteine + adenosine. Its pathway is amino-acid biosynthesis; L-homocysteine biosynthesis; L-homocysteine from S-adenosyl-L-homocysteine: step 1/1. Its function is as follows. May play a key role in the regulation of the intracellular concentration of adenosylhomocysteine. This chain is Adenosylhomocysteinase, found in Mycobacterium sp. (strain JLS).